Consider the following 363-residue polypeptide: Protein arginine N-methyltransferase 2 (363 aa).

ANK repeat units lie at residues Ala-22 to Asp-46 and Leu-48 to Lys-80. In terms of domain architecture, RMT2 spans Lys-111–Ile-363. Residues Phe-120, Phe-186–Val-191, Glu-209–His-211, Trp-236–Gln-237, and Asp-265 contribute to the S-adenosyl-L-methionine site.

This sequence belongs to the class I-like SAM-binding methyltransferase superfamily. RMT2 methyltransferase family. As to quaternary structure, monomer.

Its subcellular location is the cytoplasm. The protein localises to the nucleus. Functionally, S-adenosyl-L-methionine-dependent protein-arginine N-methyltransferase that methylates the delta-nitrogen atom of arginine residues to form N5-methylarginine (type IV) in target proteins. Monomethylates ribosomal protein L12. In Cryptococcus neoformans var. neoformans serotype D (strain B-3501A) (Filobasidiella neoformans), this protein is Protein arginine N-methyltransferase 2.